We begin with the raw amino-acid sequence, 373 residues long: Anhydro-N-acetylmuramic acid kinase (373 aa).

12 to 19 (GTSLDGVD) provides a ligand contact to ATP.

This sequence belongs to the anhydro-N-acetylmuramic acid kinase family.

It carries out the reaction 1,6-anhydro-N-acetyl-beta-muramate + ATP + H2O = N-acetyl-D-muramate 6-phosphate + ADP + H(+). The protein operates within amino-sugar metabolism; 1,6-anhydro-N-acetylmuramate degradation. Its pathway is cell wall biogenesis; peptidoglycan recycling. In terms of biological role, catalyzes the specific phosphorylation of 1,6-anhydro-N-acetylmuramic acid (anhMurNAc) with the simultaneous cleavage of the 1,6-anhydro ring, generating MurNAc-6-P. Is required for the utilization of anhMurNAc either imported from the medium or derived from its own cell wall murein, and thus plays a role in cell wall recycling. The sequence is that of Anhydro-N-acetylmuramic acid kinase from Erwinia tasmaniensis (strain DSM 17950 / CFBP 7177 / CIP 109463 / NCPPB 4357 / Et1/99).